Consider the following 200-residue polypeptide: 3-isopropylmalate dehydratase small subunit (200 aa).

The protein belongs to the LeuD family. LeuD type 1 subfamily. Heterodimer of LeuC and LeuD.

The enzyme catalyses (2R,3S)-3-isopropylmalate = (2S)-2-isopropylmalate. The protein operates within amino-acid biosynthesis; L-leucine biosynthesis; L-leucine from 3-methyl-2-oxobutanoate: step 2/4. Its function is as follows. Catalyzes the isomerization between 2-isopropylmalate and 3-isopropylmalate, via the formation of 2-isopropylmaleate. The protein is 3-isopropylmalate dehydratase small subunit of Photobacterium profundum (strain SS9).